Here is an 87-residue protein sequence, read N- to C-terminus: Translation initiation factor IF-1 2 (87 aa).

The S1-like domain occupies 1-72; it reads MAKEELIELN…TKGRINFRHK (72 aa). The tract at residues 66–87 is disordered; sequence RINFRHKDERSGPPSRPPQHRR.

Belongs to the IF-1 family. As to quaternary structure, component of the 30S ribosomal translation pre-initiation complex which assembles on the 30S ribosome in the order IF-2 and IF-3, IF-1 and N-formylmethionyl-tRNA(fMet); mRNA recruitment can occur at any time during PIC assembly.

Its subcellular location is the cytoplasm. Its function is as follows. One of the essential components for the initiation of protein synthesis. Stabilizes the binding of IF-2 and IF-3 on the 30S subunit to which N-formylmethionyl-tRNA(fMet) subsequently binds. Helps modulate mRNA selection, yielding the 30S pre-initiation complex (PIC). Upon addition of the 50S ribosomal subunit IF-1, IF-2 and IF-3 are released leaving the mature 70S translation initiation complex. The polypeptide is Translation initiation factor IF-1 2 (Bordetella parapertussis (strain 12822 / ATCC BAA-587 / NCTC 13253)).